Reading from the N-terminus, the 726-residue chain is Eukaryotic translation initiation factor 3 subunit B (726 aa).

The tract at residues 1–94 (MSAALEDIKL…LFVECASPAD (94 aa)) is sufficient for interaction with HCR1 and TIF32. Residues 1–219 (MSAALEDIKL…GVVMWGGPHF (219 aa)) form a sufficient for interaction with PIC8 region. Residues 37 to 120 (QYIVVCGAPV…HRLFIYTMRD (84 aa)) enclose the RRM domain. WD repeat units follow at residues 142–182 (FPTS…EESV), 186–224 (RKNWSTNYIRFSPKGTYLFSYHPQGVVMWGGPHFDRLRR), 235–283 (VSPS…LQST), 331–374 (LKVP…MSCK), 442–485 (ELKD…FAPE), 505–549 (ITDK…TDKN), and 566–611 (NSFP…VKEE).

This sequence belongs to the eIF-3 subunit B family. In terms of assembly, component of the eukaryotic translation initiation factor 3 (eIF-3) complex.

It is found in the cytoplasm. In terms of biological role, RNA-binding component of the eukaryotic translation initiation factor 3 (eIF-3) complex, which is involved in protein synthesis of a specialized repertoire of mRNAs and, together with other initiation factors, stimulates binding of mRNA and methionyl-tRNAi to the 40S ribosome. The eIF-3 complex specifically targets and initiates translation of a subset of mRNAs involved in cell proliferation. The protein is Eukaryotic translation initiation factor 3 subunit B of Vanderwaltozyma polyspora (strain ATCC 22028 / DSM 70294 / BCRC 21397 / CBS 2163 / NBRC 10782 / NRRL Y-8283 / UCD 57-17) (Kluyveromyces polysporus).